A 72-amino-acid polypeptide reads, in one-letter code: Translation initiation factor IF-1 (72 aa).

Positions M1–K72 constitute an S1-like domain.

It belongs to the IF-1 family. As to quaternary structure, component of the 30S ribosomal translation pre-initiation complex which assembles on the 30S ribosome in the order IF-2 and IF-3, IF-1 and N-formylmethionyl-tRNA(fMet); mRNA recruitment can occur at any time during PIC assembly.

The protein resides in the cytoplasm. Its function is as follows. One of the essential components for the initiation of protein synthesis. Stabilizes the binding of IF-2 and IF-3 on the 30S subunit to which N-formylmethionyl-tRNA(fMet) subsequently binds. Helps modulate mRNA selection, yielding the 30S pre-initiation complex (PIC). Upon addition of the 50S ribosomal subunit IF-1, IF-2 and IF-3 are released leaving the mature 70S translation initiation complex. The sequence is that of Translation initiation factor IF-1 from Streptococcus pneumoniae serotype 2 (strain D39 / NCTC 7466).